A 212-amino-acid chain; its full sequence is Thylakoid membrane protein slr1949 (212 aa).

Residues 109–131 (WVQDGLLLLLALGLCGISGYRLW) form a helical membrane-spanning segment. A coiled-coil region spans residues 180–212 (PNRRQRKQYETRLQALRQSAAKMKAKTQKAKAL).

The protein localises to the cellular thylakoid membrane. The protein is Thylakoid membrane protein slr1949 of Synechocystis sp. (strain ATCC 27184 / PCC 6803 / Kazusa).